We begin with the raw amino-acid sequence, 424 residues long: MLARKSIIPEEYVLARIAAENLRKPRIRDRLPKARFIAKSGACNLAHKNIREQGRFLQDIFTTLVDLKWRHTLVIFTMSFLCSWLLFAIMWWLVAFAHGDIYAYMEKGTMEKSGLESAVCVTNVRSFTSAFLFSIEVQVTIGFGGRMMTEECPLAITVLILQNIVGLIINAVMLGCIFMKTAQAHRRAETLIFSRHAVIAVRNGKLCFMFRVGDLRKSMIISASVRIQVVKKTTTPEGEVVPIHQQDIPVDNPIESNNIFLVAPLIICHVIDKRSPLYDISATDLANQDLEVIVILEGVVETTGITTQARTSYIAEEIQWGHRFVSIVTEEEGVYSVDYSKFGNTVRVAAPRCSARELDEKPSILIQTLQKSELSHQNSLRKRNSMRRNNSMRRNNSIRRNNSSLMVPKVQFMTPEGNQCPSES.

The Cytoplasmic segment spans residues 1–69 (MLARKSIIPE…IFTTLVDLKW (69 aa)). Residue serine 6 is modified to Phosphoserine. The helical transmembrane segment at 70-94 (RHTLVIFTMSFLCSWLLFAIMWWLV) threads the bilayer. The Extracellular portion of the chain corresponds to 95 to 126 (AFAHGDIYAYMEKGTMEKSGLESAVCVTNVRS). An intramembrane region (helical; Pore-forming) is located at residues 127–138 (FTSAFLFSIEVQ). The pore-forming intramembrane region spans 139–145 (VTIGFGG). Residues 140–145 (TIGFGG) carry the Selectivity filter motif. Over 146–154 (RMMTEECPL) the chain is Extracellular. Residues 155 to 176 (AITVLILQNIVGLIINAVMLGC) form a helical membrane-spanning segment. Residues 177–424 (IFMKTAQAHR…PEGNQCPSES (248 aa)) lie on the Cytoplasmic side of the membrane. The disordered stretch occupies residues 373 to 409 (ELSHQNSLRKRNSMRRNNSMRRNNSIRRNNSSLMVPK). Positions 387-404 (RRNNSMRRNNSIRRNNSS) are enriched in low complexity.

The protein belongs to the inward rectifier-type potassium channel (TC 1.A.2.1) family. KCNJ8 subfamily. As to quaternary structure, interacts with ABCC9.

It localises to the membrane. The enzyme catalyses K(+)(in) = K(+)(out). Inward rectifier potassium channels are characterized by a greater tendency to allow potassium to flow into the cell rather than out of it. Their voltage dependence is regulated by the concentration of extracellular potassium; as external potassium is raised, the voltage range of the channel opening shifts to more positive voltages. The inward rectification is mainly due to the blockage of outward current by internal magnesium. This channel is activated by internal ATP and can be blocked by external barium. Can form a sulfonylurea-sensitive but ATP-insensitive potassium channel with ABCC9. The polypeptide is ATP-sensitive inward rectifier potassium channel 8 (Kcnj8) (Mus musculus (Mouse)).